Reading from the N-terminus, the 214-residue chain is UPF0111 protein MJ0629 (214 aa).

It belongs to the UPF0111 family.

This is UPF0111 protein MJ0629 from Methanocaldococcus jannaschii (strain ATCC 43067 / DSM 2661 / JAL-1 / JCM 10045 / NBRC 100440) (Methanococcus jannaschii).